Consider the following 26-residue polypeptide: Dermaseptin-B5 (26 aa).

A Valine amide modification is found at valine 26.

Belongs to the frog skin active peptide (FSAP) family. Dermaseptin subfamily. Expressed by the skin glands.

The protein localises to the secreted. Possesses a potent antimicrobial activity against Gram-positive and Gram-negative bacteria. Probably acts by disturbing membrane functions with its amphipathic structure. The polypeptide is Dermaseptin-B5 (Phyllomedusa bicolor (Two-colored leaf frog)).